We begin with the raw amino-acid sequence, 473 residues long: Glutamine synthetase (473 aa).

In terms of domain architecture, GS beta-grasp spans 15 to 100; it reads ENIKIIDLKF…ICSIKEPRTG (86 aa). Positions 107–473 constitute a GS catalytic domain; it reads PRTIAAKAVE…PYEFSLYYDC (367 aa). E132 provides a ligand contact to Mn(2+). E134 is a Mg(2+) binding site. E210 is a binding site for ATP. Mg(2+) contacts are provided by E215 and E223. Residues 267-268 and G268 contribute to the L-glutamate site; that span reads NG. H272 contacts Mg(2+). ATP contacts are provided by residues 274–276 and S276; that span reads HQS. L-glutamate is bound by residues R324, E330, and R342. Residues R342, R347, and K356 each contribute to the ATP site. E361 is a binding site for Mn(2+). R363 contacts L-glutamate. Y401 carries the post-translational modification O-AMP-tyrosine.

Belongs to the glutamine synthetase family. As to quaternary structure, oligomer of 12 subunits arranged in the form of two hexagons. It depends on Mg(2+) as a cofactor.

It is found in the cytoplasm. The catalysed reaction is L-glutamate + NH4(+) + ATP = L-glutamine + ADP + phosphate + H(+). With respect to regulation, inhibited by ADP (90%), AMP (80%), alanine (52%) and aspartate (41%). The activity of this enzyme could be controlled by adenylation under conditions of abundant glutamine. Its function is as follows. Involved in nitrogen metabolism via ammonium assimilation. Catalyzes the ATP-dependent biosynthesis of glutamine from glutamate and ammonia. The protein is Glutamine synthetase of Synechocystis sp. (strain ATCC 27184 / PCC 6803 / Kazusa).